The sequence spans 177 residues: Thymidine kinase (177 aa).

Residue 11-18 (GPMFSGKS) coordinates ATP. The Proton acceptor role is filled by E83. F113 contributes to the substrate binding site. Zn(2+) contacts are provided by C138 and C141. 157–161 (IEIIG) lines the substrate pocket. Zn(2+) is bound by residues C170 and C173.

The protein belongs to the thymidine kinase family. Homotetramer. Two molecules of substrate bind to each enzyme tetramer.

It carries out the reaction thymidine + ATP = dTMP + ADP + H(+). Functionally, phosphorylates thymidine and thymidine analogs, such as azidothymidine (AZT). Part of the salvage pathway for pyrimidine deoxyribonucleotide synthesis. This Cynomys gunnisoni (Gunnison's prairie dog) protein is Thymidine kinase (OPG101).